The primary structure comprises 580 residues: MAGSEEQWPRRREDGDPDAAAAPLQDAELALAGINMLLNNGFRESDQLFKQYRNHSPLMSFGASFVSFLNAMMTFEEEKMQLACDDLKTTEKLCESEEAGVIETIKNKIKKNVDARKSTPSMVDRLQRQIIIADCQVYLAVLSFVKQELSAYIKGGWILRKAWKIYSKCYVDINALQELYQKKLTEEPLASDAANDNHVVAEGVTEESLSRLKGAVSFGYGLFHLCISMVPPNLLKIINLLGFPGDRLQGLSSLTYASESKDMKAPLATLALLWYHTVVRPFFALDGSDNKGGLDEAKAILLRKESAYPNSSLFMFFKGRIQRLECQINSALTSFHTALELAVDQREIQHVCLYEIGWCSMIELNFKDAFDSFERLKNESRWSQCYYAYLTAVCQGATGDVDGAQLVFKEVQKLFKRKNNQIEQFSVKKAERFRKQTPTRALCVLASIEVLYLWKALPNCSFPNLQRMSQACHEVDDSSVVGLKHLLLGAIHKCLGNSQDALQFFQRAARDELCRQSNSYVPPYACYELGCLLLDSAETVGRGRTLLLQAKEDFSGYDFENRLHVRIHAALASLRELVPQ.

TPR repeat units lie at residues serine 312–glutamine 345, histidine 350–serine 383, and glycine 482–arginine 515.

This sequence belongs to the TTC39 family.

This chain is Tetratricopeptide repeat protein 39C (Ttc39c), found in Mus musculus (Mouse).